The chain runs to 228 residues: MNYEAIVLAAGRGKRMNAGMNKQFLELGGEPLIVRTLNVFERDERCTRIVLVVNPAERSRFEQLLARFRIQKVAALTDGGEERQHSVYNGLQALAGEEIVLIHDGARPFVRVHHLHELVNAAVQYGAAIPAVRVKDTIKKANGLFVEQTIDRSSLWAVQTPQAFRLSLIMEAHEAAKQAGYLGTDDASLVERIGKPVKIIEGDYRNIKLTTPEDLLFAEAILASRMAE.

This sequence belongs to the IspD/TarI cytidylyltransferase family. IspD subfamily.

The catalysed reaction is 2-C-methyl-D-erythritol 4-phosphate + CTP + H(+) = 4-CDP-2-C-methyl-D-erythritol + diphosphate. The protein operates within isoprenoid biosynthesis; isopentenyl diphosphate biosynthesis via DXP pathway; isopentenyl diphosphate from 1-deoxy-D-xylulose 5-phosphate: step 2/6. Catalyzes the formation of 4-diphosphocytidyl-2-C-methyl-D-erythritol from CTP and 2-C-methyl-D-erythritol 4-phosphate (MEP). The polypeptide is 2-C-methyl-D-erythritol 4-phosphate cytidylyltransferase (Geobacillus kaustophilus (strain HTA426)).